A 133-amino-acid polypeptide reads, in one-letter code: Large ribosomal subunit protein uL15 (133 aa).

Residues 1–58 (MALQNLTPAPGSTHATKRLGRGQGSGNGKTAGKGNKGQRARKGYNEKRGFEGGQQPLQ) are disordered. A compositionally biased stretch (gly residues) spans 21–35 (RGQGSGNGKTAGKGN).

This sequence belongs to the universal ribosomal protein uL15 family. As to quaternary structure, part of the 50S ribosomal subunit.

In terms of biological role, binds to the 23S rRNA. In Campylobacter curvus (strain 525.92), this protein is Large ribosomal subunit protein uL15.